The sequence spans 302 residues: Putative 2-dehydro-3-deoxy-D-gluconate aldolase YagE (302 aa).

Active-site charge relay system residues include Ser49 and Tyr112. The active-site Proton donor is the Tyr138. Lys167 acts as the Schiff-base intermediate with substrate in catalysis.

Belongs to the DapA family. In terms of assembly, a dimer of dimers.

The protein resides in the cytoplasm. It carries out the reaction 2-dehydro-3-deoxy-D-gluconate = D-glyceraldehyde + pyruvate. The enzyme catalyses 2-dehydro-3-deoxy-D-arabinonate = glycolaldehyde + pyruvate. Catalyzes the formation of 2-keto-3-deoxy-gluconate (KDG) from pyruvate and glyceraldehyde. May also function as a 2-dehydro-3-deoxy-D-pentonate aldolase. Overexpression leads to increased growth (over 2 hours) in the presence of the antibiotics norfloxacin, ampicillin and streptomycin. This chain is Putative 2-dehydro-3-deoxy-D-gluconate aldolase YagE (yagE), found in Escherichia coli (strain K12).